We begin with the raw amino-acid sequence, 240 residues long: Ribitol-5-phosphate cytidylyltransferase (240 aa).

Residues 8–11 and 81–87 contribute to the CTP site; these read FAGG and GETGQMS.

The protein belongs to the IspD/TarI cytidylyltransferase family. TarI subfamily.

The catalysed reaction is D-ribitol 5-phosphate + CTP + H(+) = CDP-L-ribitol + diphosphate. It participates in cell wall biogenesis; poly(ribitol phosphate) teichoic acid biosynthesis. Catalyzes the transfer of the cytidylyl group of CTP to D-ribitol 5-phosphate. The protein is Ribitol-5-phosphate cytidylyltransferase of Streptococcus agalactiae serotype V (strain ATCC BAA-611 / 2603 V/R).